The sequence spans 681 residues: DNA ligase (681 aa).

NAD(+) is bound by residues 34–38 (DAEYD), 83–84 (SL), and Glu115. Residue Lys117 is the N6-AMP-lysine intermediate of the active site. 4 residues coordinate NAD(+): Arg138, Glu185, Lys301, and Lys325. Residues Cys419, Cys422, Cys437, and Cys443 each coordinate Zn(2+). Positions 602 to 681 (RKSDVLAGQT…AALLALIGER (80 aa)) constitute a BRCT domain.

The protein belongs to the NAD-dependent DNA ligase family. LigA subfamily. It depends on Mg(2+) as a cofactor. Mn(2+) serves as cofactor.

The catalysed reaction is NAD(+) + (deoxyribonucleotide)n-3'-hydroxyl + 5'-phospho-(deoxyribonucleotide)m = (deoxyribonucleotide)n+m + AMP + beta-nicotinamide D-nucleotide.. DNA ligase that catalyzes the formation of phosphodiester linkages between 5'-phosphoryl and 3'-hydroxyl groups in double-stranded DNA using NAD as a coenzyme and as the energy source for the reaction. It is essential for DNA replication and repair of damaged DNA. The protein is DNA ligase of Chloroflexus aggregans (strain MD-66 / DSM 9485).